A 396-amino-acid polypeptide reads, in one-letter code: Aspartate aminotransferase (396 aa).

L-aspartate contacts are provided by G34, W130, and N183. The residue at position 246 (K246) is an N6-(pyridoxal phosphate)lysine. Residue R374 coordinates L-aspartate.

Belongs to the class-I pyridoxal-phosphate-dependent aminotransferase family. As to quaternary structure, homodimer. The cofactor is pyridoxal 5'-phosphate.

It localises to the cytoplasm. It carries out the reaction L-aspartate + 2-oxoglutarate = oxaloacetate + L-glutamate. The protein is Aspartate aminotransferase (aspC) of Haemophilus influenzae (strain ATCC 51907 / DSM 11121 / KW20 / Rd).